Consider the following 337-residue polypeptide: Protein RecA (337 aa).

66–73 contacts ATP; sequence GPESSGKT.

It belongs to the RecA family.

It is found in the cytoplasm. Can catalyze the hydrolysis of ATP in the presence of single-stranded DNA, the ATP-dependent uptake of single-stranded DNA by duplex DNA, and the ATP-dependent hybridization of homologous single-stranded DNAs. It interacts with LexA causing its activation and leading to its autocatalytic cleavage. This chain is Protein RecA, found in Mesomycoplasma hyopneumoniae (strain J / ATCC 25934 / NCTC 10110) (Mycoplasma hyopneumoniae).